Here is a 427-residue protein sequence, read N- to C-terminus: Inward rectifier potassium channel 2 (427 aa).

Topologically, residues 1-81 (MGSVRTNRYS…IFTTCVDIRW (81 aa)) are cytoplasmic. Cysteine 76 bears the S-nitrosocysteine mark. Residues 82 to 106 (RWMLVIFCLAFVLSWLFFGCVFWLI) form a helical membrane-spanning segment. The Extracellular portion of the chain corresponds to 107-128 (ALLHGDLDASKESKACVSEVNS). The segment at residues 129–140 (FTAAFLFSIETQ) is an intramembrane region (helical; Pore-forming). The segment at residues 141–147 (TTIGYGF) is an intramembrane region (pore-forming). The Selectivity filter signature appears at 142–147 (TIGYGF). Over 148–156 (RCVTDECPI) the chain is Extracellular. The chain crosses the membrane as a helical span at residues 157–178 (AVFMVVFQSIVGCIIDAFIIGA). Residues 179 to 427 (VMAKMAKPKK…PRPLRRESEI (249 aa)) lie on the Cytoplasmic side of the membrane. Residues 181–208 (AKMAKPKKRNETLVFSHNAVIAMRDGKL) are polyphosphoinositide (PIP2)-binding. Residues 384–427 (SKEEDDSENGVPESTSTDTPPDIDLHNQASVPLEPRPLRRESEI) are disordered. The PDZ-binding signature appears at 425–427 (SEI).

The protein belongs to the inward rectifier-type potassium channel (TC 1.A.2.1) family. KCNJ2 subfamily. As to quaternary structure, homotetramer. Homomultimeric and heteromultimeric association with KCNJ4/Kir2.3. Can form heteromeric channels with Kir2.6/KCNJ18. Associates, via its PDZ-recognition domain, with a complex containing LIN7A, LIN7B, LIN7C, DLG1, CASK and APBA1. Post-translationally, S-nitrosylation increases the open probability and inward rectifying currents.

The protein localises to the cell membrane. It localises to the sarcolemma. It is found in the T-tubule. The catalysed reaction is K(+)(in) = K(+)(out). With respect to regulation, activated by phosphatidylinositol 4,5 biphosphate (PtdIns(4,5)P2). Inward rectifier potassium channels are characterized by a greater tendency to allow potassium to flow into the cell rather than out of it. Their voltage dependence is regulated by the concentration of extracellular potassium; as external potassium is raised, the voltage range of the channel opening shifts to more positive voltages. The inward rectification is mainly due to the blockage of outward current by internal magnesium. Can be blocked by extracellular barium and cesium. Probably participates in establishing action potential waveform and excitability of neuronal and muscle tissues. The protein is Inward rectifier potassium channel 2 (KCNJ2) of Sus scrofa (Pig).